The chain runs to 622 residues: Probable potassium transport system protein Kup (622 aa).

Transmembrane regions (helical) follow at residues 8-28, 50-70, 101-121, 137-157, 165-185, 213-233, 247-267, 285-305, 337-357, 366-386, 393-413, and 419-439; these read LAVL…TSVL, ILSI…VSLV, VLLL…VITP, PTFT…LFAM, IGKF…LLGV, ITFI…ALYA, WFSV…ALLL, ALIP…QALI, IYMP…VVMF, AYGI…FYVI, PLAL…AFFA, and LFAG…LMIT.

The protein belongs to the HAK/KUP transporter (TC 2.A.72) family.

The protein localises to the cell inner membrane. The enzyme catalyses K(+)(in) + H(+)(in) = K(+)(out) + H(+)(out). Transport of potassium into the cell. Likely operates as a K(+):H(+) symporter. The protein is Probable potassium transport system protein Kup of Polaromonas naphthalenivorans (strain CJ2).